We begin with the raw amino-acid sequence, 302 residues long: Protease HtpX homolog (302 aa).

A helical membrane pass occupies residues 27-47 (LLMAIGGIIGGTAGMLIALII). Residue His-141 participates in Zn(2+) binding. Glu-142 is a catalytic residue. Zn(2+) is bound at residue His-145. Helical transmembrane passes span 151–171 (VLVA…ANMA) and 195–215 (IGAI…QLAI). Glu-220 contacts Zn(2+).

Belongs to the peptidase M48B family. It depends on Zn(2+) as a cofactor.

It is found in the cell inner membrane. The sequence is that of Protease HtpX homolog from Aquifex aeolicus (strain VF5).